A 660-amino-acid chain; its full sequence is Potassium voltage-gated channel subfamily KQT member 1 (660 aa).

Residues 1–18 (MSSEVKSRWSGSGSQKSG) show a composition bias toward polar residues. Residues 1 to 67 (MSSEVKSRWS…PESRAADSRA (67 aa)) are disordered. Topologically, residues 1–113 (MSSEVKSRWS…YNFLERPTGW (113 aa)) are cytoplasmic. Residues 53–67 (STDKNPESRAADSRA) show a composition bias toward basic and acidic residues. Residues 114–135 (KCFIYHFTVFLIVLVCLIFSVM) traverse the membrane as a helical segment. The Extracellular segment spans residues 136 to 146 (STIEQYHYFAN). The chain crosses the membrane as a helical span at residues 147 to 169 (RALVWMEIVLVVFFGTEYIVRLW). The Cytoplasmic segment spans residues 170 to 185 (SAGCRSKYVGFWGRLR). A helical membrane pass occupies residues 186–211 (FARKPISIIDLIVVVASVIVLCVGSN). At 212 to 219 (GQVFATSA) the chain is on the extracellular side. The helical; Voltage-sensor transmembrane segment at 220–235 (IRGIRFLQILRMLHVD) threads the bilayer. Residues 236–253 (RQGGTWRLLGSVVFIHRQ) are Cytoplasmic-facing. Gln-237 contributes to the a 1,2-diacyl-sn-glycero-3-phospho-(1D-myo-inositol-4,5-bisphosphate) binding site. The chain crosses the membrane as a helical span at residues 254–276 (ELITTLYIGFLGLIFSSYFVYLA). Residues 277-292 (EKDAVDDSGSQQFGSY) lie on the Extracellular side of the membrane. The pore-forming intramembrane region spans 293-313 (ADALWWGVVTVTTIGYGDKVP). The Extracellular segment spans residues 314-315 (QT). A helical transmembrane segment spans residues 316–341 (WIGRTIASCFSVFAISFFALPAGILG). Residues 342–660 (SGFALKVQQK…RKDQDNQPDL (319 aa)) are Cytoplasmic-facing. Residues 399-426 (SPSPKTKKSVGKRKKLKTDKDNGLNSEK) form a disordered region. Basic residues predominate over residues 403–415 (KTKKSVGKRKKLK). Positions 579-615 (KNTIGARLNRVEEKFVHMDQKLNTITDMLHHLVAHQQ) form a coiled coil.

It belongs to the potassium channel family. KQT (TC 1.A.1.15) subfamily. Kv7.1/KCNQ1 sub-subfamily. As to quaternary structure, tetramer. Heterotetramer with KCNE1; targets to the membrane raft. Interacts (via C-terminus) with CALM; forms a heterotetramer in a calcium-independent manner. Interacts with KCNE2; form a heterooligomer complex that targets to the membrane raft and leading to currents with an apparently instantaneous activation, a rapid deactivation process and a linear current-voltage relationship and decreases the amplitude of the outward current. Interacts with KCNE3; four KCNE3 molecules are bound to one KCNQ1 tetramer (4:4 KCNQ1:KCNE3 stoichiometry); alters membrane raft localization; affects KCNQ1 structure and gating properties. Interacts with KCNE4; impairs KCNQ1 localization in lipid rafts and inhibits voltage-gated potassium channel activity. Interacts with KCNE5; impairs KCNQ1 localization in lipid rafts and only conducts current upon strong and continued depolarization. As to expression, expressed only in rectal gland and heart. Faintly expressed in intestine. Undetectable in kidney, brain, testis, liver and gills.

It is found in the cell membrane. It localises to the cytoplasmic vesicle membrane. The protein resides in the membrane raft. The protein localises to the endoplasmic reticulum. Its subcellular location is the basolateral cell membrane. The catalysed reaction is K(+)(in) = K(+)(out). With respect to regulation, PIP2 molecule is essential to activate KCNQ channels by inducing the coupling of the voltage-sensing domain (VSD) and the pore-forming domain (PD). Upon channel activation, PIP2 disrupts the VSD-calmodulin/CALM interactions, causing the release of CALM from the VSD which triggers the opening of the gate. Calcium potentiates KCNQ1 channel current through calcium-bound CALM. Calcium-bound CALM competes with PIP2 to stabilize the channel open state. Its function is as follows. Pore-forming subunit of the voltage-gated potassium (Kv) channel involved in the regulation of cardiomyocyte excitability and important in normal development and functions of myocardium, inner ear, stomach and colon. Associates with KCNE beta subunits that modulates current kinetics. Induces a voltage-dependent by rapidly activating and slowly deactivating potassium-selective outward current. Also promotes a delayed voltage activated potassium current showing outward rectification characteristic. During beta-adrenergic receptor stimulation participates in cardiac repolarization by associating with KCNE1 to form the I(Ks) cardiac potassium current that increases the amplitude and slows down the activation kinetics of outward potassium current I(Ks). When associated with KCNE3, forms the potassium channel that is important for cyclic AMP-stimulated intestinal secretion of chloride ions. When associated with KCNE2, forms a heterooligomer complex leading to currents with an apparently instantaneous activation, a rapid deactivation process and a linear current-voltage relationship and decreases the amplitude of the outward current. When associated with KCNE4, inhibits voltage-gated potassium channel activity. When associated with KCNE5, this complex only conducts current upon strong and continued depolarization. In Squalus acanthias (Spiny dogfish), this protein is Potassium voltage-gated channel subfamily KQT member 1.